The following is a 101-amino-acid chain: MEKVTNDTIKHVAALAQLEFSEEELAKFTPQMGKILEMAEELQAVDTTGVEETVQVVDRDTVFREDVPEKWQTREEMMKNVPDKSNGFVKVPVIIDKDDNQ.

This sequence belongs to the GatC family. In terms of assembly, heterotrimer of A, B and C subunits.

It carries out the reaction L-glutamyl-tRNA(Gln) + L-glutamine + ATP + H2O = L-glutaminyl-tRNA(Gln) + L-glutamate + ADP + phosphate + H(+). The enzyme catalyses L-aspartyl-tRNA(Asn) + L-glutamine + ATP + H2O = L-asparaginyl-tRNA(Asn) + L-glutamate + ADP + phosphate + 2 H(+). Allows the formation of correctly charged Asn-tRNA(Asn) or Gln-tRNA(Gln) through the transamidation of misacylated Asp-tRNA(Asn) or Glu-tRNA(Gln) in organisms which lack either or both of asparaginyl-tRNA or glutaminyl-tRNA synthetases. The reaction takes place in the presence of glutamine and ATP through an activated phospho-Asp-tRNA(Asn) or phospho-Glu-tRNA(Gln). This is Aspartyl/glutamyl-tRNA(Asn/Gln) amidotransferase subunit C from Lactobacillus delbrueckii subsp. bulgaricus (strain ATCC 11842 / DSM 20081 / BCRC 10696 / JCM 1002 / NBRC 13953 / NCIMB 11778 / NCTC 12712 / WDCM 00102 / Lb 14).